The following is a 293-amino-acid chain: NAD kinase (293 aa).

The Proton acceptor role is filled by Asp-73. NAD(+) is bound by residues 73-74, 147-148, Arg-175, Asp-177, and 188-193; these read DG, NE, and TAYSMS.

Belongs to the NAD kinase family. A divalent metal cation is required as a cofactor.

It is found in the cytoplasm. It catalyses the reaction NAD(+) + ATP = ADP + NADP(+) + H(+). Functionally, involved in the regulation of the intracellular balance of NAD and NADP, and is a key enzyme in the biosynthesis of NADP. Catalyzes specifically the phosphorylation on 2'-hydroxyl of the adenosine moiety of NAD to yield NADP. The protein is NAD kinase of Colwellia psychrerythraea (strain 34H / ATCC BAA-681) (Vibrio psychroerythus).